The sequence spans 188 residues: Cytidylate kinase (188 aa).

G7–T15 is an ATP binding site.

It belongs to the cytidylate kinase family. Type 2 subfamily.

It localises to the cytoplasm. It carries out the reaction CMP + ATP = CDP + ADP. The enzyme catalyses dCMP + ATP = dCDP + ADP. This Thermoplasma acidophilum (strain ATCC 25905 / DSM 1728 / JCM 9062 / NBRC 15155 / AMRC-C165) protein is Cytidylate kinase (cmk).